We begin with the raw amino-acid sequence, 673 residues long: Vasorin (673 aa).

Residues 1 to 24 form the signal peptide; it reads MHSRSCLPPLLLLLLVLLGSGVQG. Residues 25–53 enclose the LRRNT domain; the sequence is CPSGCQCNQPQTVFCTARQGTTVPRDVPP. Residues 25 to 576 are Extracellular-facing; that stretch reads CPSGCQCNQP…VTQAREGNLP (552 aa). 10 LRR repeats span residues 54 to 75, 78 to 99, 102 to 123, 126 to 147, 150 to 170, 171 to 192, 194 to 215, 218 to 239, 241 to 265, and 266 to 288; these read DTVG…CFAG, GLQL…IFQP, NLSN…TFRG, RLER…AFDA, RLLE…LHLP, RLLL…ILDT, NVEA…LFGR, NLHD…IQGL, GLTR…AGLT, and ALQE…SSLF. N-linked (GlcNAc...) asparagine glycans are attached at residues Asn102 and Asn118. N-linked (GlcNAc...) asparagine glycosylation is present at Asn274. Residues 299–352 enclose the LRRCT domain; sequence NPFNCLCPLSWFGPWVRENHVVLASPEETRCHFPPKNAGRLLLDLDYADFGCPV. A disordered region spans residues 369-389; that stretch reads PTLSTSSQAPTWPSLTEPTTQ. Positions 370–389 are enriched in polar residues; that stretch reads TLSTSSQAPTWPSLTEPTTQ. Positions 406–443 constitute an EGF-like domain; the sequence is QPQDCPASICLNGGSCRLGARHHWECLCPEGFIGLYCE. Intrachain disulfides connect Cys410-Cys421, Cys415-Cys431, and Cys433-Cys442. In terms of domain architecture, Fibronectin type-III spans 463–559; it reads PLLPLSIEPV…ACGEANTSQA (97 aa). N-linked (GlcNAc...) asparagine glycans are attached at residues Asn501, Asn529, and Asn555. The helical transmembrane segment at 577 to 597 threads the bilayer; that stretch reads LLIAPALAAVLLAVLAAAGAA. Residues 598–673 lie on the Cytoplasmic side of the membrane; it reads YCVRRARATS…QGVLPAKHYI (76 aa). The interval 608 to 648 is disordered; it reads TAQDKGQVGPGTGPLELEGVKAPLEPGSKATEGGGEALSGG.

As to quaternary structure, interacts with TGFB1, TGFB2 and TGFB3. In terms of processing, N-glycosylated.

The protein resides in the membrane. Its function is as follows. May act as an inhibitor of TGF-beta signaling. This chain is Vasorin (Vasn), found in Mus musculus (Mouse).